A 440-amino-acid polypeptide reads, in one-letter code: Polyprenol-phosphate-mannose-dependent alpha-(1-2)-phosphatidylinositol mannoside mannosyltransferase (440 aa).

Helical transmembrane passes span 15–35, 87–107, 109–129, 144–161, 164–184, 193–213, 224–244, 281–301, 316–336, 360–380, and 395–415; these read LAPT…VLWV, LAAI…SSAI, ATTL…LDVW, AWLA…LEPI, NFEF…DCVP, LLLG…LYFL, TAAT…SDSV, PRFI…VWAA, APVL…PVSW, VWFT…PITL, and LAGG…GLVS. The tract at residues 419–440 is disordered; it reads THTGDAHETDEPLVPLARGEAG.

Belongs to the glycosyltransferase 87 family.

It is found in the cell membrane. Its pathway is phospholipid metabolism; phosphatidylinositol metabolism. Functionally, responsible for the addition of alpha-(1-2) mannose branches to the linear mannan core on the biosynthetic pathway to mature Lipoarabinomannan (LAM). The chain is Polyprenol-phosphate-mannose-dependent alpha-(1-2)-phosphatidylinositol mannoside mannosyltransferase from Mycolicibacterium smegmatis (strain ATCC 700084 / mc(2)155) (Mycobacterium smegmatis).